A 640-amino-acid polypeptide reads, in one-letter code: Envelope glycoprotein (640 aa).

The N-terminal stretch at 1-32 (MEGPAFSKPLKDKINPWGPLIILGILIRAGVS) is a signal peptide. The Extracellular portion of the chain corresponds to 33 to 582 (VQHDSPHQVF…FNKSPWFTTL (550 aa)). Residues Asn-43 and Asn-58 are each glycosylated (N-linked (GlcNAc...) asparagine; by host). 2 disulfides stabilise this stretch: Cys-109-Cys-126 and Cys-118-Cys-131. N-linked (GlcNAc...) asparagine; by host glycosylation is present at Asn-297. 6 disulfide bridges follow: Cys-307/Cys-310, Cys-307/Cys-535, Cys-337/Cys-391, Cys-356/Cys-368, Cys-398/Cys-411, and Cys-527/Cys-534. A CXXC motif is present at residues 307–310 (CWLC). Residues Asn-329 and Asn-336 are each glycosylated (N-linked (GlcNAc...) asparagine; by host). A glycan (N-linked (GlcNAc...) asparagine; by host) is linked at Asn-369. Positions 444–464 (VSLTLALLLGGLTMGGIAAGV) are fusion peptide. Residues 473-509 (ATQQFQQLQAAMHDDLKEVEKSITNLEKSLTSLSEVV) are a coiled coil. The segment at 510–526 (LQNRRGLDLLFLKEGGL) is immunosuppression. The CX6CC motif lies at 527-535 (CAALKEECC). Residues 583–603 (ISTIMGPLIILLLILLFGPWI) traverse the membrane as a helical segment. Over 604–640 (LNRLVQFIKDRISVVQALVLTQQYHQLKTIGDCKSRE) the chain is Cytoplasmic. The YXXL motif; contains endocytosis signal signature appears at 627–630 (YHQL).

As to quaternary structure, the mature envelope protein (Env) consists of a trimer of SU-TM heterodimers attached by a labile interchain disulfide bond. Specific enzymatic cleavages in vivo yield mature proteins. Envelope glycoproteins are synthesized as an inactive precursor that is N-glycosylated and processed likely by host cell furin or by a furin-like protease in the Golgi to yield the mature SU and TM proteins. The cleavage site between SU and TM requires the minimal sequence [KR]-X-[KR]-R. The R-peptide is released from the C-terminus of the cytoplasmic tail of the TM protein upon particle formation as a result of proteolytic cleavage by the viral protease. Cleavage of this peptide is required for TM to become fusogenic. Post-translationally, the CXXC motif is highly conserved across a broad range of retroviral envelope proteins. It is thought to participate in the formation of a labile disulfide bond possibly with the CX6CC motif present in the transmembrane protein. Isomerization of the intersubunit disulfide bond to an SU intrachain disulfide bond is thought to occur upon receptor recognition in order to allow membrane fusion. In terms of processing, the R-peptide is palmitoylated.

The protein localises to the virion membrane. It is found in the host cell membrane. Functionally, the surface protein (SU) attaches the virus to the host cell by binding to its receptor. This interaction triggers the refolding of the transmembrane protein (TM) and is thought to activate its fusogenic potential by unmasking its fusion peptide. Fusion occurs at the host cell plasma membrane. Its function is as follows. The transmembrane protein (TM) acts as a class I viral fusion protein. Under the current model, the protein has at least 3 conformational states: pre-fusion native state, pre-hairpin intermediate state, and post-fusion hairpin state. During viral and target cell membrane fusion, the coiled coil regions (heptad repeats) assume a trimer-of-hairpins structure, positioning the fusion peptide in close proximity to the C-terminal region of the ectodomain. The formation of this structure appears to drive apposition and subsequent fusion of viral and target cell membranes. Membranes fusion leads to delivery of the nucleocapsid into the cytoplasm. The polypeptide is Envelope glycoprotein (env) (Mus musculus (Mouse)).